We begin with the raw amino-acid sequence, 288 residues long: Long chain fatty acid elongase 1 (288 aa).

A run of 7 helical transmembrane segments spans residues 39-59 (FFAD…VVVF), 73-93 (LTIP…AGAV), 126-146 (WVWL…FLVL), 150-170 (PLMF…WYSH), 180-197 (GIYL…YYFL), 217-237 (IVQF…MHFT), and 247-267 (VFKL…NFFL).

Belongs to the ELO family.

The protein resides in the membrane. It catalyses the reaction (6Z,9Z,12Z)-octadecatrienoyl-CoA + malonyl-CoA + H(+) = (8Z,11Z,14Z)-3-oxoeicosatrienoyl-CoA + CO2 + CoA. The enzyme catalyses (6Z,9Z,12Z,15Z)-octadecatetraenoyl-CoA + malonyl-CoA + H(+) = (8Z,11Z,14Z,17Z)-3-oxoicosatetraenoyl-CoA + CO2 + CoA. It carries out the reaction (9Z)-hexadecenoyl-CoA + malonyl-CoA + H(+) = 3-oxo-(11Z)-octadecenoyl-CoA + CO2 + CoA. Its pathway is lipid metabolism; fatty acid biosynthesis. Catalyzes the first and rate-limiting reaction of the four reactions that constitute the long-chain fatty acids elongation cycle. Uses malonyl-CoA to add 2 carbons per cycle to the chain of long-chain fatty acids. Condensing enzyme that catalyzes the elongation of monounsaturated (MUFA) and polyunsaturated (PUFA) fatty acids that are involved in multiple biological processes as precursors of membrane lipids and lipid mediators. The protein is Long chain fatty acid elongase 1 of Caenorhabditis elegans.